We begin with the raw amino-acid sequence, 1201 residues long: HEAT repeat-containing protein 6 (1201 aa).

Residues 1-25 (MAGKVTFLGSNSSFSPDGKTQGFKS) form a disordered region. One copy of the HEAT 1 repeat lies at 182 to 221 (PDLLGPSGVLVKYGDPKQPDIELRRSAVHCIANLCLSVPS). The disordered stretch occupies residues 321–390 (AVKPEPAQDT…SQSSMLTSPS (70 aa)). Residues 341-352 (QKKRKSRGKGKK) show a composition bias toward basic residues. Positions 375–390 (SGWSHGSQSSMLTSPS) are enriched in polar residues. 3 HEAT repeats span residues 460-498 (GIGG…GSRQ), 523-560 (SIRE…NVPY), and 566-603 (GLLS…TQAP). The span at 618–633 (SSLGSGISTPQESPLS) shows a compositional bias: polar residues. A disordered region spans residues 618–653 (SSLGSGISTPQESPLSWRQPARRDEEASSPAAAEGP).

This is HEAT repeat-containing protein 6 (heatr6) from Danio rerio (Zebrafish).